The primary structure comprises 161 residues: Nucleotide-binding protein GM21_0633 (161 aa).

This sequence belongs to the YajQ family.

Functionally, nucleotide-binding protein. This is Nucleotide-binding protein GM21_0633 from Geobacter sp. (strain M21).